The chain runs to 188 residues: Aspartic protease inhibitor 11 (188 aa).

An N-linked (GlcNAc...) asparagine glycan is attached at Asn19. Intrachain disulfides connect Cys48–Cys93, Cys142–Cys159, and Cys150–Cys153.

Belongs to the protease inhibitor I3 (leguminous Kunitz-type inhibitor) family.

Its subcellular location is the vacuole. Its function is as follows. Inhibitor of cathepsin D (aspartic protease) and trypsin (serine protease). May protect the plant by inhibiting proteases of invading organisms. The protein is Aspartic protease inhibitor 11 of Solanum tuberosum (Potato).